Reading from the N-terminus, the 237-residue chain is Large ribosomal subunit protein uL2 (237 aa).

A compositionally biased stretch (polar residues) spans 1–11 (MGKRLISQNRG). Disordered regions lie at residues 1–26 (MGKR…KRKG) and 204–237 (PYGG…SRRT). 2 stretches are compositionally biased toward basic residues: residues 13-26 (GTPK…KRKG) and 228-237 (KVGHIASRRT).

Belongs to the universal ribosomal protein uL2 family. In terms of assembly, part of the 50S ribosomal subunit. Forms a bridge to the 30S subunit in the 70S ribosome.

In terms of biological role, one of the primary rRNA binding proteins. Required for association of the 30S and 50S subunits to form the 70S ribosome, for tRNA binding and peptide bond formation. It has been suggested to have peptidyltransferase activity; this is somewhat controversial. Makes several contacts with the 16S rRNA in the 70S ribosome. This is Large ribosomal subunit protein uL2 from Methanococcus vannielii.